The following is a 238-amino-acid chain: ATP-dependent dethiobiotin synthetase BioD (238 aa).

13 to 18 contributes to the ATP binding site; that stretch reads DIGKTF. Threonine 17 is a Mg(2+) binding site. Lysine 38 is an active-site residue. Serine 42 is a binding site for substrate. ATP-binding positions include aspartate 55, 116 to 119, 209 to 211, and asparagine 216; these read EGSG and PRI. Mg(2+) is bound by residues aspartate 55 and glutamate 116.

Belongs to the dethiobiotin synthetase family. Homodimer. It depends on Mg(2+) as a cofactor.

Its subcellular location is the cytoplasm. It carries out the reaction (7R,8S)-7,8-diammoniononanoate + CO2 + ATP = (4R,5S)-dethiobiotin + ADP + phosphate + 3 H(+). The protein operates within cofactor biosynthesis; biotin biosynthesis; biotin from 7,8-diaminononanoate: step 1/2. Catalyzes a mechanistically unusual reaction, the ATP-dependent insertion of CO2 between the N7 and N8 nitrogen atoms of 7,8-diaminopelargonic acid (DAPA, also called 7,8-diammoniononanoate) to form a ureido ring. The polypeptide is ATP-dependent dethiobiotin synthetase BioD (Clostridium novyi (strain NT)).